A 408-amino-acid polypeptide reads, in one-letter code: Putative F-box protein At1g53550 (408 aa).

Residues 29–74 (TCYFDPIPVDLVINILSRLSLECIARCRCVSKLWSSIIRRPNYNQL) form the F-box domain.

This Arabidopsis thaliana (Mouse-ear cress) protein is Putative F-box protein At1g53550.